The sequence spans 462 residues: tRNA modification GTPase MnmE (462 aa).

The (6S)-5-formyl-5,6,7,8-tetrahydrofolate site is built by R23, E88, and R127. Residues 224–383 (GLATVIIGRP…LEKAIADLFF (160 aa)) form the TrmE-type G domain. N234 contacts K(+). Residues 234-239 (NVGKSS), 253-259 (TDIPGTT), and 278-281 (DTAG) contribute to the GTP site. Residue S238 participates in Mg(2+) binding. The K(+) site is built by T253, I255, and T258. T259 is a Mg(2+) binding site. (6S)-5-formyl-5,6,7,8-tetrahydrofolate is bound at residue K462.

It belongs to the TRAFAC class TrmE-Era-EngA-EngB-Septin-like GTPase superfamily. TrmE GTPase family. Homodimer. Heterotetramer of two MnmE and two MnmG subunits. K(+) serves as cofactor.

Its subcellular location is the cytoplasm. In terms of biological role, exhibits a very high intrinsic GTPase hydrolysis rate. Involved in the addition of a carboxymethylaminomethyl (cmnm) group at the wobble position (U34) of certain tRNAs, forming tRNA-cmnm(5)s(2)U34. In Geobacillus kaustophilus (strain HTA426), this protein is tRNA modification GTPase MnmE.